Consider the following 211-residue polypeptide: Ribosomal RNA small subunit methyltransferase G (211 aa).

S-adenosyl-L-methionine contacts are provided by residues glycine 73, 126–127 (IE), and arginine 142.

It belongs to the methyltransferase superfamily. RNA methyltransferase RsmG family.

The protein localises to the cytoplasm. The enzyme catalyses guanosine(527) in 16S rRNA + S-adenosyl-L-methionine = N(7)-methylguanosine(527) in 16S rRNA + S-adenosyl-L-homocysteine. In terms of biological role, specifically methylates the N7 position of guanine in position 527 of 16S rRNA. The chain is Ribosomal RNA small subunit methyltransferase G from Methylorubrum extorquens (strain PA1) (Methylobacterium extorquens).